The chain runs to 561 residues: Mercuric reductase (561 aa).

Positions 1 to 65 (MTTLKITGMT…AVAGLGYEAT (65 aa)) constitute an HMA domain. Residues C11 and C14 each contribute to the a metal cation site. A110, G130, and T135 together coordinate FAD. The cysteines at positions 136 and 141 are disulfide-linked. Positions 145, 211, 403, and 411 each coordinate FAD. Hg(2+)-binding residues include C558 and C559.

This sequence belongs to the class-I pyridine nucleotide-disulfide oxidoreductase family. As to quaternary structure, homodimer. The cofactor is FAD.

The enzyme catalyses Hg + NADP(+) + H(+) = Hg(2+) + NADPH. Its function is as follows. Resistance to Hg(2+) in bacteria appears to be governed by a specialized system which includes mercuric reductase. MerA protein is responsible for volatilizing mercury as Hg(0). The polypeptide is Mercuric reductase (merA) (Acinetobacter calcoaceticus).